The chain runs to 403 residues: Deubiquitinase and deneddylase Dub1 (403 aa).

Over residues 1–11 (MLSPTNSTSKT) the composition is skewed to polar residues. Positions 1-24 (MLSPTNSTSKTAPVPPRDSSKPVL) are disordered. The helical transmembrane segment at 40–60 (TALAVLLVVVTLGLILLFYSF) threads the bilayer. The tract at residues 77-132 (KEQPTISIPVPLPSPPLAVPRPSTPPAPTPAISRPSTPSAPKPSTPPPLLPKAPKP) is disordered. Pro residues-rich tracts occupy residues 86–105 (VPLP…PAPT) and 114–130 (PSAP…PKAP). Active-site residues include His-277, Asp-294, and Cys-347.

This sequence belongs to the peptidase C48 family.

It localises to the secreted. The protein localises to the host cell. It is found in the membrane. Effector proteins function to alter host cell physiology and promote bacterial survival in host tissues. This protease possesses deubiquitinating and deneddylating activities. In Chlamydia trachomatis serovar L2b (strain UCH-1/proctitis), this protein is Deubiquitinase and deneddylase Dub1 (cdu1).